The following is a 226-amino-acid chain: Sugar fermentation stimulation protein homolog (226 aa).

Belongs to the SfsA family.

This Picrophilus torridus (strain ATCC 700027 / DSM 9790 / JCM 10055 / NBRC 100828 / KAW 2/3) protein is Sugar fermentation stimulation protein homolog.